The following is a 953-amino-acid chain: UvrABC system protein A (953 aa).

33–40 (GLSGSGKS) lines the ATP pocket. 2 ABC transporter domains span residues 320–599 (WGST…EESI) and 619–949 (GHDN…RYLK). Residue 652–659 (GVSGSGKS) coordinates ATP. The C4-type zinc-finger motif lies at 752–778 (CEACQGDGLIKIEMHFLPDVYVKCDIC).

Belongs to the ABC transporter superfamily. UvrA family. Forms a heterotetramer with UvrB during the search for lesions.

It is found in the cytoplasm. The UvrABC repair system catalyzes the recognition and processing of DNA lesions. UvrA is an ATPase and a DNA-binding protein. A damage recognition complex composed of 2 UvrA and 2 UvrB subunits scans DNA for abnormalities. When the presence of a lesion has been verified by UvrB, the UvrA molecules dissociate. In Rickettsia typhi (strain ATCC VR-144 / Wilmington), this protein is UvrABC system protein A.